The chain runs to 68 residues: ATP-dependent 6-phosphofructokinase (68 aa).

17 to 20 is an ATP binding site; it reads GDGT. Asp18 is a binding site for Mg(2+). Asp48 functions as the Proton acceptor in the catalytic mechanism.

It belongs to the phosphofructokinase type A (PFKA) family. PPi-dependent PFK group II subfamily. Atypical ATP-dependent clade 'X' sub-subfamily. As to quaternary structure, homotetramer. It depends on Mg(2+) as a cofactor.

It is found in the cytoplasm. It catalyses the reaction beta-D-fructose 6-phosphate + ATP = beta-D-fructose 1,6-bisphosphate + ADP + H(+). Its pathway is carbohydrate degradation; glycolysis; D-glyceraldehyde 3-phosphate and glycerone phosphate from D-glucose: step 3/4. With respect to regulation, allosterically activated by AMP. In terms of biological role, catalyzes the phosphorylation of D-fructose 6-phosphate to fructose 1,6-bisphosphate by ATP, the first committing step of glycolysis. This is ATP-dependent 6-phosphofructokinase (PFK) from Triticum aestivum (Wheat).